The following is a 419-amino-acid chain: tRNA(Ile)-lysidine synthase (419 aa).

Position 31-36 (31-36) interacts with ATP; it reads SGGGDS.

The protein belongs to the tRNA(Ile)-lysidine synthase family.

The protein localises to the cytoplasm. It catalyses the reaction cytidine(34) in tRNA(Ile2) + L-lysine + ATP = lysidine(34) in tRNA(Ile2) + AMP + diphosphate + H(+). In terms of biological role, ligates lysine onto the cytidine present at position 34 of the AUA codon-specific tRNA(Ile) that contains the anticodon CAU, in an ATP-dependent manner. Cytidine is converted to lysidine, thus changing the amino acid specificity of the tRNA from methionine to isoleucine. This is tRNA(Ile)-lysidine synthase from Ruegeria pomeroyi (strain ATCC 700808 / DSM 15171 / DSS-3) (Silicibacter pomeroyi).